Consider the following 222-residue polypeptide: Vacuolar protein sorting-associated protein 2 homolog 2 (222 aa).

Coiled coils occupy residues 26–83 (RGIE…AQIR) and 143–222 (SEAI…LRRI). A disordered region spans residues 179–222 (SSAPKGRIATKTAAPPASTAATNKNSESSEVDELEKRLASLRRI). A compositionally biased stretch (low complexity) spans 187 to 203 (ATKTAAPPASTAATNKN).

It belongs to the SNF7 family. Component of the endosomal sorting required for transport complex III (ESCRT-III), composed at least of VPS2, VPS20, VPS24 and VPS32. Interacts with CHMP1A, CHMP1B and VPS60-1.

The protein localises to the endosome. Its function is as follows. Component of the ESCRT-III complex, which is required for multivesicular bodies (MVBs) formation and sorting of endosomal cargo proteins into MVBs. The ESCRT-III complex is probably involved in the concentration of MVB cargo. This is Vacuolar protein sorting-associated protein 2 homolog 2 (VPS2.2) from Arabidopsis thaliana (Mouse-ear cress).